Reading from the N-terminus, the 70-residue chain is Large ribosomal subunit protein bL31 (70 aa).

Residues Cys-16, Cys-18, Cys-37, and Cys-40 each coordinate Zn(2+).

Belongs to the bacterial ribosomal protein bL31 family. Type A subfamily. As to quaternary structure, part of the 50S ribosomal subunit. Requires Zn(2+) as cofactor.

Binds the 23S rRNA. The sequence is that of Large ribosomal subunit protein bL31 from Haemophilus influenzae (strain PittEE).